The chain runs to 299 residues: 4-diphosphocytidyl-2-C-methyl-D-erythritol kinase (299 aa).

Residue lysine 18 is part of the active site. 104–114 contributes to the ATP binding site; the sequence is PIASGIGGGSS. The active site involves aspartate 146.

This sequence belongs to the GHMP kinase family. IspE subfamily.

It catalyses the reaction 4-CDP-2-C-methyl-D-erythritol + ATP = 4-CDP-2-C-methyl-D-erythritol 2-phosphate + ADP + H(+). The protein operates within isoprenoid biosynthesis; isopentenyl diphosphate biosynthesis via DXP pathway; isopentenyl diphosphate from 1-deoxy-D-xylulose 5-phosphate: step 3/6. Functionally, catalyzes the phosphorylation of the position 2 hydroxy group of 4-diphosphocytidyl-2C-methyl-D-erythritol. This Brucella melitensis biotype 1 (strain ATCC 23456 / CCUG 17765 / NCTC 10094 / 16M) protein is 4-diphosphocytidyl-2-C-methyl-D-erythritol kinase.